Reading from the N-terminus, the 364-residue chain is GMP reductase (364 aa).

Residues 26–27, Lys-78, 132–134, and 183–184 each bind NADP(+); these read SR, DVA, and IG. The K(+) site is built by Gly-184, Gly-186, and Cys-189. Catalysis depends on Cys-189, which acts as the Thioimidate intermediate. Catalysis depends on Thr-191, which acts as the Proton donor/acceptor. Arg-192 serves as a coordination point for K(+). Residues 222-224, 245-246, 271-273, and 289-293 contribute to the GMP site; these read DGG, GG, GMS, and RASEG. NADP(+) is bound by residues Met-272, 288–289, and 317–320; these read YR and SACT.

The protein belongs to the IMPDH/GMPR family. GuaC type 1 subfamily. Homotetramer.

It carries out the reaction IMP + NH4(+) + NADP(+) = GMP + NADPH + 2 H(+). In terms of biological role, catalyzes the irreversible NADPH-dependent deamination of GMP to IMP. It functions in the conversion of nucleobase, nucleoside and nucleotide derivatives of G to A nucleotides, and in maintaining the intracellular balance of A and G nucleotides. This is GMP reductase (gmr-1) from Onchocerca volvulus.